Reading from the N-terminus, the 274-residue chain is Glutamate--cysteine ligase regulatory subunit (274 aa).

N6-acetyllysine is present on lysine 263.

Belongs to the aldo/keto reductase family. Glutamate--cysteine ligase light chain subfamily. In terms of assembly, heterodimer of a catalytic heavy chain and a regulatory light chain. In all tissues examined. Highest levels in skeletal muscle.

It functions in the pathway sulfur metabolism; glutathione biosynthesis; glutathione from L-cysteine and L-glutamate: step 1/2. This chain is Glutamate--cysteine ligase regulatory subunit (GCLM), found in Homo sapiens (Human).